A 336-amino-acid chain; its full sequence is MNILLTGGGTGGHLAIAKALMESLASKNQSLFFIGSQRGQDRSWFEHEEGFKRRFFLETQGVVNQRGIAKIRSLSSQFQAMLEARKILKNHQIKRVVSVGGYSAAPASLAALSLGIPLYIHEQNAKVGLLNRLLKPFSRAFLSSYDSNSLIRDYPVRDAFFEVARVRSRVKKILFLGGSQGAKAINDWALELAPLIHQRGIAIMHQCGEVDYERMKRGYEERSIPVELFAFDRAIHQKMQQADLAISRAGASSLWELGANGLPALFIPYPFAAGDHQYYNAKFILDQGLGWMVRQENLSTEVLLEILEEDLSQKSECLMAYVKRGAADRMADFILS.

UDP-N-acetyl-alpha-D-glucosamine-binding positions include 10 to 12 (TGG), asparagine 124, arginine 157, serine 179, and glutamine 277.

Belongs to the glycosyltransferase 28 family. MurG subfamily.

Its subcellular location is the cell inner membrane. It catalyses the reaction di-trans,octa-cis-undecaprenyl diphospho-N-acetyl-alpha-D-muramoyl-L-alanyl-D-glutamyl-meso-2,6-diaminopimeloyl-D-alanyl-D-alanine + UDP-N-acetyl-alpha-D-glucosamine = di-trans,octa-cis-undecaprenyl diphospho-[N-acetyl-alpha-D-glucosaminyl-(1-&gt;4)]-N-acetyl-alpha-D-muramoyl-L-alanyl-D-glutamyl-meso-2,6-diaminopimeloyl-D-alanyl-D-alanine + UDP + H(+). It participates in cell wall biogenesis; peptidoglycan biosynthesis. Functionally, cell wall formation. Catalyzes the transfer of a GlcNAc subunit on undecaprenyl-pyrophosphoryl-MurNAc-pentapeptide (lipid intermediate I) to form undecaprenyl-pyrophosphoryl-MurNAc-(pentapeptide)GlcNAc (lipid intermediate II). This chain is UDP-N-acetylglucosamine--N-acetylmuramyl-(pentapeptide) pyrophosphoryl-undecaprenol N-acetylglucosamine transferase, found in Wolinella succinogenes (strain ATCC 29543 / DSM 1740 / CCUG 13145 / JCM 31913 / LMG 7466 / NCTC 11488 / FDC 602W) (Vibrio succinogenes).